We begin with the raw amino-acid sequence, 704 residues long: G-protein coupled receptor-associated protein LMBRD2B (704 aa).

Over 1–3 (MSG) the chain is Extracellular. Residues 4–21 (AALGIEIVVVFFLALFLL) traverse the membrane as a helical segment. The Cytoplasmic segment spans residues 22–33 (HRYGDFKKQQRM). Residues 34 to 54 (VLFGTLLAWYLCFLIVFILPL) form a helical membrane-spanning segment. Residues 55–111 (DVSTTIYNQCLIDQEAQTQTPSVSPVLSEQTTANASISPAKSTQRVCYKPWSYIPDG) are Extracellular-facing. An N-linked (GlcNAc...) asparagine glycan is attached at asparagine 88. A helical membrane pass occupies residues 112-132 (IMPVFWRVVYWTSQCLTWLLL). Residues 133 to 157 (PFMQSYARSGGFTITGKIKTALIEN) lie on the Cytoplasmic side of the membrane. The helical transmembrane segment at 158–178 (AIYYGTYLFIFGSLLIYVAVH) threads the bilayer. At 179 to 192 (PQWHLSWYELQTIG) the chain is on the extracellular side. A helical membrane pass occupies residues 193-213 (ITAANTWGLFLLVLLLGYGLV). Topologically, residues 214–393 (DIPRSYWEAS…ECLLKQWFYR (180 aa)) are cytoplasmic. Residues 235-266 (KAAKLMTEKADSEENLEDVMEEVRKINESIKY) are a coiled coil. Residues 394–414 (VLAVVLALFSVAVVWSECTFF) traverse the membrane as a helical segment. The Extracellular portion of the chain corresponds to 415–438 (STHPVLSLFAVFIQLAERDYNYLY). Residues 439–459 (IEMACFITIFFLCTCVYSTVF) traverse the membrane as a helical segment. Topologically, residues 460 to 481 (RIRVFNYYYLASHHQTDAYSLQ) are cytoplasmic. A helical membrane pass occupies residues 482–502 (FSGMLFCRLTPPLCLNFLGLI). Topologically, residues 503 to 527 (HMDSAISHQAKKQTAYTSIMGSMRV) are extracellular. A helical membrane pass occupies residues 528–548 (LSFIANGFYIYYPMLIVVLCI). Residues 549–704 (ATYFSLGTRC…SSRNRIFDDV (156 aa)) are Cytoplasmic-facing. The stretch at 576-612 (DLIDEGRELLRRERRKRQRIEDGENRRREWRERYAQR) forms a coiled coil. Disordered stretches follow at residues 613-654 (DENA…QSGR) and 672-704 (TLTD…FDDV). The segment covering 631 to 654 (YGETLNANTNRQAKYTRSGSQSGR) has biased composition (polar residues).

It belongs to the LIMR family.

It is found in the cell membrane. May associate with G-protein coupled receptors and regulate downstream signaling pathways. This is G-protein coupled receptor-associated protein LMBRD2B (lmbrd2b) from Danio rerio (Zebrafish).